Consider the following 205-residue polypeptide: High frequency lysogenization protein HflD homolog (205 aa).

This sequence belongs to the HflD family.

It localises to the cytoplasm. Its subcellular location is the cell inner membrane. In Vibrio atlanticus (strain LGP32) (Vibrio splendidus (strain Mel32)), this protein is High frequency lysogenization protein HflD homolog.